The chain runs to 266 residues: Regulatory protein RecX (266 aa).

This sequence belongs to the RecX family.

It localises to the cytoplasm. Functionally, modulates RecA activity. The chain is Regulatory protein RecX from Levilactobacillus brevis (strain ATCC 367 / BCRC 12310 / CIP 105137 / JCM 1170 / LMG 11437 / NCIMB 947 / NCTC 947) (Lactobacillus brevis).